The chain runs to 465 residues: MAYKPTQTLRKLAEKSSLDIVSREFADYMDSKDPLRKMRDEFFYPRVKDLPGVDLSLVDGDQDSIYFCGNSLGLQPRGCRELIDRSLTKWEQMGVLGHTSGWCPWKPIEDILIKPMAEIIGAKDIEVVAMNTLTVNLHMMMVPFYRPTPQRYKILMEGKAFPSDQYAAQSQVHFHGFDPDKDIIEVFPREGEQSLRTEDILSAIEEHGNSITLVLFSGVQYYTGQFFDMKTITAAAQKKGCVVGWDLAHAVGNVELHLHDWNVDFACWCTYKYLNSGPGGIAGAFVHEKHAYNFELPKFAGWWGTDRNSRFQMRKEFEQIPGAHGYQCSNPPVFQCLLLRASLDVFEKTSVKEIRAKGDLLTAYLELLLLHYFSPSNDITKNGNTPHVSIITPADPKDRGCQLSVKFSVPVDKVFEELCKRGFVGDIRHPDVMRIAPAPLYNSFADVHRFISMLNAAFKTITPNS.

Pyridoxal 5'-phosphate is bound by residues leucine 133, threonine 134, 161 to 164, serine 217, aspartate 246, histidine 249, and tyrosine 271; that span reads FPSD. The residue at position 272 (lysine 272) is an N6-(pyridoxal phosphate)lysine. Residues tryptophan 302 and asparagine 330 each contribute to the pyridoxal 5'-phosphate site.

This sequence belongs to the kynureninase family. As to quaternary structure, homodimer. Requires pyridoxal 5'-phosphate as cofactor.

The protein localises to the cytoplasm. It catalyses the reaction L-kynurenine + H2O = anthranilate + L-alanine + H(+). The enzyme catalyses 3-hydroxy-L-kynurenine + H2O = 3-hydroxyanthranilate + L-alanine + H(+). Its pathway is amino-acid degradation; L-kynurenine degradation; L-alanine and anthranilate from L-kynurenine: step 1/1. It participates in cofactor biosynthesis; NAD(+) biosynthesis; quinolinate from L-kynurenine: step 2/3. In terms of biological role, catalyzes the cleavage of L-kynurenine (L-Kyn) and L-3-hydroxykynurenine (L-3OHKyn) into anthranilic acid (AA) and 3-hydroxyanthranilic acid (3-OHAA), respectively. This chain is Kynureninase, found in Nematostella vectensis (Starlet sea anemone).